The following is a 304-amino-acid chain: tRNA-uridine aminocarboxypropyltransferase 1 (304 aa).

Residues 1 to 30 (MALSPSVVPQESEENNANCVETKQSQTAST) are disordered. The segment covering 15–30 (NNANCVETKQSQTAST) has biased composition (polar residues). The short motif at 206–209 (DSTW) is the DXTW element.

The protein belongs to the TDD superfamily. DTWD1 family.

The protein localises to the nucleus. The catalysed reaction is a uridine in tRNA + S-adenosyl-L-methionine = a 3-[(3S)-3-amino-3-carboxypropyl]uridine in tRNA + S-methyl-5'-thioadenosine + H(+). Its function is as follows. Catalyzes the formation of 3-(3-amino-3-carboxypropyl)uridine (acp3U) at position 20 in the D-loop of several cytoplasmic tRNAs (acp3U(20)). The chain is tRNA-uridine aminocarboxypropyltransferase 1 from Rattus norvegicus (Rat).